A 212-amino-acid polypeptide reads, in one-letter code: MERLLVLARHGQSEWNLKKLFTGWRDPELTELGIDEARRAGRWLKSQGTQFDVAFTSNLRRAQHTCSLILEEMGQGGLETIRNEALNERDYGDLSGLNKDDARERWGDAQVHEWRRSYDVPPPGGESLKDTAARVLPYYIQTILPRVMSGERVLVAAHGNSLRALVMVLDGMTTKTIASLEIATGIPLVYRLKADTTVESKTVLDKDIDQDD.

Residues 9–16 (RHGQSEWN), 22–23 (TG), Arg61, 88–91 (ERDY), Lys99, 115–116 (RR), and 159–160 (GN) contribute to the substrate site. The active-site Tele-phosphohistidine intermediate is the His10. The active-site Proton donor/acceptor is Glu88.

Belongs to the phosphoglycerate mutase family. BPG-dependent PGAM subfamily. Homodimer.

It catalyses the reaction (2R)-2-phosphoglycerate = (2R)-3-phosphoglycerate. Its pathway is carbohydrate degradation; glycolysis; pyruvate from D-glyceraldehyde 3-phosphate: step 3/5. Its function is as follows. Catalyzes the interconversion of 2-phosphoglycerate and 3-phosphoglycerate. The polypeptide is 2,3-bisphosphoglycerate-dependent phosphoglycerate mutase (Methylorubrum extorquens (strain CM4 / NCIMB 13688) (Methylobacterium extorquens)).